A 290-amino-acid chain; its full sequence is Protein translocase subunit SecF (290 aa).

The next 6 helical transmembrane spans lie at 15–35 (VFMI…FTKG), 131–151 (KAIL…TVRF), 156–176 (AISA…IFAI), 184–204 (SFIA…IIVF), 234–256 (TLYT…GVVL), and 260–282 (ILAI…SAIL).

This sequence belongs to the SecD/SecF family. SecF subfamily. Forms a complex with SecD. Part of the essential Sec protein translocation apparatus which comprises SecA, SecYEG and auxiliary proteins SecDF. Other proteins may also be involved.

The protein localises to the cell inner membrane. Its function is as follows. Part of the Sec protein translocase complex. Interacts with the SecYEG preprotein conducting channel. SecDF uses the proton motive force (PMF) to complete protein translocation after the ATP-dependent function of SecA. This Dictyoglomus turgidum (strain DSM 6724 / Z-1310) protein is Protein translocase subunit SecF.